A 311-amino-acid polypeptide reads, in one-letter code: Ornithine carbamoyltransferase (311 aa).

Residues glutamine 85, arginine 109, and 136–139 (HPCQ) each bind carbamoyl phosphate. Residues asparagine 167, aspartate 231, and 235-236 (SM) contribute to the L-ornithine site. Carbamoyl phosphate contacts are provided by residues 271 to 272 (CL) and arginine 299.

It belongs to the aspartate/ornithine carbamoyltransferase superfamily. OTCase family.

Its subcellular location is the cytoplasm. It carries out the reaction carbamoyl phosphate + L-ornithine = L-citrulline + phosphate + H(+). It functions in the pathway amino-acid biosynthesis; L-arginine biosynthesis; L-arginine from L-ornithine and carbamoyl phosphate: step 1/3. Reversibly catalyzes the transfer of the carbamoyl group from carbamoyl phosphate (CP) to the N(epsilon) atom of ornithine (ORN) to produce L-citrulline. This chain is Ornithine carbamoyltransferase (argF), found in Geobacillus stearothermophilus (Bacillus stearothermophilus).